The chain runs to 160 residues: Ribosomal RNA large subunit methyltransferase H (160 aa).

Residues Leu76, Gly108, and 127–132 (FGFMTW) contribute to the S-adenosyl-L-methionine site.

The protein belongs to the RNA methyltransferase RlmH family. In terms of assembly, homodimer.

The protein localises to the cytoplasm. It catalyses the reaction pseudouridine(1915) in 23S rRNA + S-adenosyl-L-methionine = N(3)-methylpseudouridine(1915) in 23S rRNA + S-adenosyl-L-homocysteine + H(+). Its function is as follows. Specifically methylates the pseudouridine at position 1915 (m3Psi1915) in 23S rRNA. The sequence is that of Ribosomal RNA large subunit methyltransferase H from Bartonella henselae (strain ATCC 49882 / DSM 28221 / CCUG 30454 / Houston 1) (Rochalimaea henselae).